Consider the following 441-residue polypeptide: Membrane protein PB1A10.07c (441 aa).

Transmembrane regions (helical) follow at residues 1–21 (MGAV…VVGI), 41–61 (VGAV…SWCM), 97–117 (LSFT…LCNT), 128–148 (GLWP…FFIP), 158–178 (IISV…LVDF), 206–226 (TVGM…FFCA), 235–255 (INTI…HPTI), 263–283 (GLAQ…SALA), 307–327 (VIGA…AASS), 364–384 (YNFI…ASLL), and 415–435 (IITS…PVFF).

Belongs to the TDE1 family.

Its subcellular location is the membrane. In Schizosaccharomyces pombe (strain 972 / ATCC 24843) (Fission yeast), this protein is Membrane protein PB1A10.07c.